The chain runs to 149 residues: Large ribosomal subunit protein bL9 (149 aa).

This sequence belongs to the bacterial ribosomal protein bL9 family.

Functionally, binds to the 23S rRNA. This Chromobacterium violaceum (strain ATCC 12472 / DSM 30191 / JCM 1249 / CCUG 213 / NBRC 12614 / NCIMB 9131 / NCTC 9757 / MK) protein is Large ribosomal subunit protein bL9.